Consider the following 327-residue polypeptide: Diacylglycerol acyltransferase/mycolyltransferase Ag85B (327 aa).

The N-terminal stretch at 1–38 is a signal peptide; it reads MIDVSGKIRAWGRWLLVGAAATLPSLISLAGGAATASA. Substrate is bound at residue 80–81; that stretch reads LR. Residues 96–106 are fibronectin-binding; the sequence is FEWYYQSGLSV. Cys-125 and Cys-130 form a disulfide bridge. 2 residues coordinate substrate: Ser-164 and Asp-192. The active-site Nucleophile is Ser-164. Glu-268 is a catalytic residue. Residues 270–273, Lys-277, and 300–302 contribute to the substrate site; these read FVHG and HSW. Residue His-300 is part of the active site.

Belongs to the mycobacterial A85 antigen family.

It localises to the secreted. The enzyme catalyses 2 alpha,alpha'-trehalose 6-mycolate = alpha,alpha'-trehalose 6,6'-bismycolate + alpha,alpha-trehalose. It carries out the reaction an acyl-CoA + a 1,2-diacyl-sn-glycerol = a triacyl-sn-glycerol + CoA. In terms of biological role, the antigen 85 proteins (FbpA, FbpB, FbpC) are responsible for the high affinity of mycobacteria for fibronectin, a large adhesive glycoprotein, which facilitates the attachment of M.tuberculosis to murine alveolar macrophages (AMs). They also help to maintain the integrity of the cell wall by catalyzing the transfer of mycolic acids to cell wall arabinogalactan and through the synthesis of alpha,alpha-trehalose dimycolate (TDM, cord factor). They catalyze the transfer of a mycoloyl residue from one molecule of alpha,alpha-trehalose monomycolate (TMM) to another TMM, leading to the formation of TDM. This is Diacylglycerol acyltransferase/mycolyltransferase Ag85B (fbpB) from Mycobacterium leprae (strain TN).